The sequence spans 90 residues: Small ribosomal subunit protein bS18 (90 aa).

It belongs to the bacterial ribosomal protein bS18 family. In terms of assembly, part of the 30S ribosomal subunit. Forms a tight heterodimer with protein bS6.

In terms of biological role, binds as a heterodimer with protein bS6 to the central domain of the 16S rRNA, where it helps stabilize the platform of the 30S subunit. This chain is Small ribosomal subunit protein bS18, found in Polynucleobacter asymbioticus (strain DSM 18221 / CIP 109841 / QLW-P1DMWA-1) (Polynucleobacter necessarius subsp. asymbioticus).